Here is an 847-residue protein sequence, read N- to C-terminus: MRVPLSWLGEYVDLEPGTTPAEVHAALVSVGLEEEGVHTFGIEGPVVVGEVIDFVEEPQSNGKTIRWCQVRVAAEGQKAADGGADVRGIVCGAGNFFPGDKVVVTLPGAALPGPAPLTPFVIAARKTYGHVSDGMIASARELGLGDDHDGILRLSTLGLDPEVGADAVSLLGLDDTAVEVNVTPDRGYAFSIRGIAREYAHATGAAFRDPAEAVASPPPHAHGFSVAVEDRAPIRDRVGASVFVTRVVRDVDATRPTPPWMVARLKLAGIRSISLVVDITNYVMLELGQPTHGYDLDRLSGGIVVRRAHAGETLVTLDDQTRALHAEDLLITDDSGAIGLAGVMGGASTEIGAGTRNVLVEAANFDPVSIARTARRHKLPSEASKRFERGVDPRVAVAAAARVVQLLEQLAGGTADGLGSLLDETADAEPIRLPDDYIPNLIGVAFTDDEVRGALAEIGGSVSDTEGALLVVPPTWRPDLRDKSDLAEEVARIVGFDRIPSVLPVAPPGRGLSRAQTLRRAVAQTLADNGATEVLAFPFVGAAQNDLFGSPEPGGVPAVKLANPLDATAAYLRTSLLPGLLGIAKRNLARGLVDLSVYETGTVFLPGAALGSETLPPGAALPSRETLAGLNAGIPDQPRHLAGVVLGHTVRKQPGQPAVAAGLADALAMVDQAAAAVGVAVEPVQSRHQALHPGRTAQLVAGDGVRTVLGYAGELSPALAAELDLPRVVAVFELDLDALIAVAPAEIVAGTIAGFPAATQDLSLVVGDEVPAGEVLRAVREGAGALLEDIRLVDDYRGTGLPDSSKSLTFALRFRADDRTLTAAEASEAKQAGAARAGQLFGAAIRE.

Residues 40-168 (FGIEGPVVVG…LDPEVGADAV (129 aa)) enclose the tRNA-binding domain. In terms of domain architecture, B5 spans 426 to 501 (ADAEPIRLPD…RIVGFDRIPS (76 aa)). Asp479, Asp485, Glu488, and Glu489 together coordinate Mg(2+). Positions 753–846 (AGFPAATQDL…AGQLFGAAIR (94 aa)) constitute an FDX-ACB domain.

Belongs to the phenylalanyl-tRNA synthetase beta subunit family. Type 1 subfamily. As to quaternary structure, tetramer of two alpha and two beta subunits. Mg(2+) serves as cofactor.

The protein localises to the cytoplasm. It catalyses the reaction tRNA(Phe) + L-phenylalanine + ATP = L-phenylalanyl-tRNA(Phe) + AMP + diphosphate + H(+). This is Phenylalanine--tRNA ligase beta subunit from Leifsonia xyli subsp. xyli (strain CTCB07).